A 443-amino-acid chain; its full sequence is C4-dicarboxylate transport protein (443 aa).

A run of 9 helical transmembrane segments spans residues 17–37, 57–77, 92–112, 139–159, 161–181, 201–221, 234–254, 320–340, and 368–388; these read PFYSHLYVQVLAAIAAGILLG, LVKMIIAPVIFLTVATGIAGM, LYFLTFSTLALVIGMVVANVV, EQSIVGFLTNIIPTTIVGAFA, GDILQVLFFSVLFGIALAMVG, LVAILMKAAPIGAFGAMAFTI, MLIGTFYLTSLLFVLVVLGAV, IYMTLAALFIAQATGINLSWG, and AATLSVVPSVPVAGMALILGI.

It belongs to the dicarboxylate/amino acid:cation symporter (DAACS) (TC 2.A.23) family.

The protein resides in the cell inner membrane. Its function is as follows. Responsible for the transport of dicarboxylates such as succinate, fumarate, and malate from the periplasm across the membrane. This chain is C4-dicarboxylate transport protein, found in Rhizobium leguminosarum bv. trifolii (strain WSM2304).